The primary structure comprises 23 residues: Thymidine phosphorylase (23 aa).

The protein belongs to the thymidine/pyrimidine-nucleoside phosphorylase family. In terms of assembly, homodimer.

It carries out the reaction thymidine + phosphate = 2-deoxy-alpha-D-ribose 1-phosphate + thymine. The enzymes which catalyze the reversible phosphorolysis of pyrimidine nucleosides are involved in the degradation of these compounds and in their utilization as carbon and energy sources, or in the rescue of pyrimidine bases for nucleotide synthesis. This Lacticaseibacillus rhamnosus (Lactobacillus rhamnosus) protein is Thymidine phosphorylase (deoA).